The sequence spans 88 residues: Probable small nuclear ribonucleoprotein F (88 aa).

Positions Asn7–Asp79 constitute a Sm domain.

It belongs to the snRNP Sm proteins family. SmF/LSm6 subfamily.

The protein localises to the nucleus. In terms of biological role, probable common Sm protein, is found in U1 and U2 snRNPs and may be part of the spliceosome. In Arabidopsis thaliana (Mouse-ear cress), this protein is Probable small nuclear ribonucleoprotein F.